The primary structure comprises 1120 residues: Transcription-repair-coupling factor (1120 aa).

The 166-residue stretch at aspartate 591 to isoleucine 756 folds into the Helicase ATP-binding domain. Glycine 604–threonine 611 serves as a coordination point for ATP. The DEEQ box signature appears at aspartate 709–glutamine 712. The 155-residue stretch at isoleucine 777 to aspartate 931 folds into the Helicase C-terminal domain.

This sequence in the N-terminal section; belongs to the UvrB family. It in the C-terminal section; belongs to the helicase family. RecG subfamily.

It is found in the cytoplasm. In terms of biological role, couples transcription and DNA repair by recognizing RNA polymerase (RNAP) stalled at DNA lesions. Mediates ATP-dependent release of RNAP and its truncated transcript from the DNA, and recruitment of nucleotide excision repair machinery to the damaged site. The chain is Transcription-repair-coupling factor from Rickettsia bellii (strain RML369-C).